Here is a 688-residue protein sequence, read N- to C-terminus: Glycine--tRNA ligase beta subunit (688 aa).

Belongs to the class-II aminoacyl-tRNA synthetase family. As to quaternary structure, tetramer of two alpha and two beta subunits.

It is found in the cytoplasm. It carries out the reaction tRNA(Gly) + glycine + ATP = glycyl-tRNA(Gly) + AMP + diphosphate. This chain is Glycine--tRNA ligase beta subunit (glyS), found in Haemophilus influenzae (strain ATCC 51907 / DSM 11121 / KW20 / Rd).